The primary structure comprises 265 residues: Probable enoyl-CoA hydratase 1, peroxisomal (265 aa).

Met1 carries the N-acetylmethionine modification. Residues 68 to 72 (SGVDL) and Ala112 contribute to the substrate site. The short motif at 263-265 (SKL) is the Microbody targeting signal element.

Belongs to the enoyl-CoA hydratase/isomerase family.

The protein localises to the peroxisome. It carries out the reaction a (3S)-3-hydroxyacyl-CoA = a (2E)-enoyl-CoA + H2O. It catalyses the reaction a 4-saturated-(3S)-3-hydroxyacyl-CoA = a (3E)-enoyl-CoA + H2O. The protein operates within lipid metabolism; fatty acid beta-oxidation. Functionally, straight-chain enoyl-CoA thioesters from C4 up to at least C16 are processed, although with decreasing catalytic rate. The chain is Probable enoyl-CoA hydratase 1, peroxisomal from Arabidopsis thaliana (Mouse-ear cress).